The chain runs to 826 residues: Leucine--tRNA ligase (826 aa).

The 'HIGH' region motif lies at 42-52; that stretch reads PYPSGNLHMGH. Positions 581–585 match the 'KMSKS' region motif; sequence KMSKS. Position 584 (K584) interacts with ATP.

This sequence belongs to the class-I aminoacyl-tRNA synthetase family.

The protein localises to the cytoplasm. The enzyme catalyses tRNA(Leu) + L-leucine + ATP = L-leucyl-tRNA(Leu) + AMP + diphosphate. This is Leucine--tRNA ligase from Desulforudis audaxviator (strain MP104C).